Reading from the N-terminus, the 403-residue chain is Acetyl-CoA acetyltransferase IA (403 aa).

The Acyl-thioester intermediate role is filled by Cys-91. Active-site proton acceptor residues include His-353 and Cys-383. The Microbody targeting signal signature appears at 401–403 (AKL).

This sequence belongs to the thiolase-like superfamily. Thiolase family. Multimeric.

It localises to the peroxisome. The catalysed reaction is 2 acetyl-CoA = acetoacetyl-CoA + CoA. Its pathway is metabolic intermediate biosynthesis; (R)-mevalonate biosynthesis; (R)-mevalonate from acetyl-CoA: step 1/3. The polypeptide is Acetyl-CoA acetyltransferase IA (PACTA) (Candida tropicalis (Yeast)).